A 149-amino-acid polypeptide reads, in one-letter code: 3-dehydroquinate dehydratase (149 aa).

Tyrosine 26 acts as the Proton acceptor in catalysis. Positions 78, 84, and 91 each coordinate substrate. The active-site Proton donor is histidine 104. Substrate is bound by residues 105–106 (IS) and arginine 115.

It belongs to the type-II 3-dehydroquinase family. In terms of assembly, homododecamer.

The catalysed reaction is 3-dehydroquinate = 3-dehydroshikimate + H2O. It participates in metabolic intermediate biosynthesis; chorismate biosynthesis; chorismate from D-erythrose 4-phosphate and phosphoenolpyruvate: step 3/7. Catalyzes a trans-dehydration via an enolate intermediate. This Buchnera aphidicola subsp. Schizaphis graminum (strain Sg) protein is 3-dehydroquinate dehydratase (aroQ).